Consider the following 1097-residue polypeptide: U3 small nucleolar RNA-associated protein 22 (1097 aa).

Basic and acidic residues-rich tracts occupy residues M1–S10 and K18–H27. The tract at residues M1–H27 is disordered.

Belongs to the NRAP family. In terms of assembly, component of the ribosomal small subunit (SSU) processome.

The protein resides in the nucleus. Its subcellular location is the nucleolus. Functionally, involved in nucleolar processing of pre-18S ribosomal RNA and ribosome assembly. In Schizosaccharomyces pombe (strain 972 / ATCC 24843) (Fission yeast), this protein is U3 small nucleolar RNA-associated protein 22.